Here is a 151-residue protein sequence, read N- to C-terminus: Cytochrome c-type biogenesis protein CcmE 1 (151 aa).

Residues 1–8 lie on the Cytoplasmic side of the membrane; sequence MNPLRKKR. Residues 9 to 29 traverse the membrane as a helical; Signal-anchor for type II membrane protein segment; that stretch reads LIIILAILVGVGAAVGLALSA. The Periplasmic segment spans residues 30-151; the sequence is LQQNINLFYT…QSAPTPAKEG (122 aa). Heme-binding residues include histidine 124 and tyrosine 128. A disordered region spans residues 131-151; that stretch reads PEVTKALKDSGQSAPTPAKEG.

It belongs to the CcmE/CycJ family.

Its subcellular location is the cell inner membrane. In terms of biological role, heme chaperone required for the biogenesis of c-type cytochromes. Transiently binds heme delivered by CcmC and transfers the heme to apo-cytochromes in a process facilitated by CcmF and CcmH. The polypeptide is Cytochrome c-type biogenesis protein CcmE 1 (Pseudomonas fluorescens (strain Pf0-1)).